A 130-amino-acid chain; its full sequence is L-ectoine synthase (130 aa).

The protein belongs to the ectoine synthase family.

The catalysed reaction is (2S)-4-acetamido-2-aminobutanoate = L-ectoine + H2O. Its pathway is amine and polyamine biosynthesis; ectoine biosynthesis; L-ectoine from L-aspartate 4-semialdehyde: step 3/3. Its function is as follows. Catalyzes the circularization of gamma-N-acetyl-alpha,gamma-diaminobutyric acid (ADABA) to ectoine (1,4,5,6-tetrahydro-2-methyl-4-pyrimidine carboxylic acid), which is an excellent osmoprotectant. The polypeptide is L-ectoine synthase (Mycobacteroides abscessus (strain ATCC 19977 / DSM 44196 / CCUG 20993 / CIP 104536 / JCM 13569 / NCTC 13031 / TMC 1543 / L948) (Mycobacterium abscessus)).